The primary structure comprises 263 residues: tRNA pseudouridine synthase A (263 aa).

D51 functions as the Nucleophile in the catalytic mechanism. Position 109 (Y109) interacts with substrate.

This sequence belongs to the tRNA pseudouridine synthase TruA family. In terms of assembly, homodimer.

The enzyme catalyses uridine(38/39/40) in tRNA = pseudouridine(38/39/40) in tRNA. Functionally, formation of pseudouridine at positions 38, 39 and 40 in the anticodon stem and loop of transfer RNAs. This is tRNA pseudouridine synthase A from Pseudoalteromonas atlantica (strain T6c / ATCC BAA-1087).